We begin with the raw amino-acid sequence, 293 residues long: uncharacterized protein (293 aa).

Residues 1-58 form the HTH lysR-type domain; that stretch reads MDLRRFITLKTVVEEGSFLRASQKLCCTQSTVTFHIQQLEQEFSVQLFEKIGRRMCLT. The segment at residues 18–37 is a DNA-binding region (H-T-H motif); that stretch reads FLRASQKLCCTQSTVTFHIQ.

It belongs to the LysR transcriptional regulatory family.

This is an uncharacterized protein from Escherichia coli (strain K12).